The following is a 145-amino-acid chain: 3-hydroxyacyl-[acyl-carrier-protein] dehydratase FabZ (145 aa).

H48 is an active-site residue.

Belongs to the thioester dehydratase family. FabZ subfamily.

The protein resides in the cytoplasm. It catalyses the reaction a (3R)-hydroxyacyl-[ACP] = a (2E)-enoyl-[ACP] + H2O. Involved in unsaturated fatty acids biosynthesis. Catalyzes the dehydration of short chain beta-hydroxyacyl-ACPs and long chain saturated and unsaturated beta-hydroxyacyl-ACPs. This is 3-hydroxyacyl-[acyl-carrier-protein] dehydratase FabZ from Marinobacter nauticus (strain ATCC 700491 / DSM 11845 / VT8) (Marinobacter aquaeolei).